We begin with the raw amino-acid sequence, 131 residues long: Replicase polyprotein 1ab (131 aa).

The Nidovirus-type SAM-dependent 2'-O-MTase domain maps to 1–128 (ITEFSWNKYL…KLLNFGNHFI (128 aa)).

The replicase polyprotein of coronaviruses is a multifunctional protein: it contains the activities necessary for the transcription of negative stranded RNA, leader RNA, subgenomic mRNAs and progeny virion RNA as well as proteinases responsible for the cleavage of the polyprotein into functional products. This chain is Replicase polyprotein 1ab (rep), found in Sus scrofa (Pig).